Consider the following 404-residue polypeptide: Cysteine desulfurase IscS (404 aa).

Pyridoxal 5'-phosphate-binding positions include 75 to 76 (AT), N155, Q183, and 203 to 205 (SAH). Position 206 is an N6-(pyridoxal phosphate)lysine (K206). T243 lines the pyridoxal 5'-phosphate pocket. The Cysteine persulfide intermediate role is filled by C328. C328 lines the [2Fe-2S] cluster pocket.

This sequence belongs to the class-V pyridoxal-phosphate-dependent aminotransferase family. NifS/IscS subfamily. In terms of assembly, homodimer. Forms a heterotetramer with IscU, interacts with other sulfur acceptors. It depends on pyridoxal 5'-phosphate as a cofactor.

The protein resides in the cytoplasm. It catalyses the reaction (sulfur carrier)-H + L-cysteine = (sulfur carrier)-SH + L-alanine. The protein operates within cofactor biosynthesis; iron-sulfur cluster biosynthesis. Master enzyme that delivers sulfur to a number of partners involved in Fe-S cluster assembly, tRNA modification or cofactor biosynthesis. Catalyzes the removal of elemental sulfur atoms from cysteine to produce alanine. Functions as a sulfur delivery protein for Fe-S cluster synthesis onto IscU, an Fe-S scaffold assembly protein, as well as other S acceptor proteins. In Neisseria meningitidis serogroup C / serotype 2a (strain ATCC 700532 / DSM 15464 / FAM18), this protein is Cysteine desulfurase IscS.